The chain runs to 320 residues: Ribosomal large subunit pseudouridine synthase C (320 aa).

The S4 RNA-binding domain occupies 20–83; sequence QRIDNFLLAK…AEREEVQVSA (64 aa). Asp-144 is an active-site residue.

Belongs to the pseudouridine synthase RluA family.

It catalyses the reaction uridine(955/2504/2580) in 23S rRNA = pseudouridine(955/2504/2580) in 23S rRNA. In terms of biological role, responsible for synthesis of pseudouridine from uracil at positions 955, 2504 and 2580 in 23S ribosomal RNA. The protein is Ribosomal large subunit pseudouridine synthase C (rluC) of Yersinia pestis.